The following is a 516-amino-acid chain: Chromosomal replication initiator protein DnaA (516 aa).

The interval 1–72 is domain I, interacts with DnaA modulators; sequence MSLEHWNLCL…LLSEFAGDDL (72 aa). Residues 72 to 179 form a domain II region; it reads LAPALKLAVK…QVEGGINHGA (108 aa). Residues 180–396 are domain III, AAA+ region; sequence NLNNSFTFDN…GALKRVIANS (217 aa). Glycine 224, glycine 226, lysine 227, and threonine 228 together coordinate ATP. The interval 397–516 is domain IV, binds dsDNA; it reads HFTGRAITPD…YKQLMRILTT (120 aa).

It belongs to the DnaA family. As to quaternary structure, oligomerizes as a right-handed, spiral filament on DNA at oriC.

Its subcellular location is the cytoplasm. Its function is as follows. Plays an essential role in the initiation and regulation of chromosomal replication. ATP-DnaA binds to the origin of replication (oriC) to initiate formation of the DNA replication initiation complex once per cell cycle. Binds the DnaA box (a 9 base pair repeat at the origin) and separates the double-stranded (ds)DNA. Forms a right-handed helical filament on oriC DNA; dsDNA binds to the exterior of the filament while single-stranded (ss)DNA is stabiized in the filament's interior. The ATP-DnaA-oriC complex binds and stabilizes one strand of the AT-rich DNA unwinding element (DUE), permitting loading of DNA polymerase. After initiation quickly degrades to an ADP-DnaA complex that is not apt for DNA replication. Binds acidic phospholipids. This Marinomonas sp. (strain MWYL1) protein is Chromosomal replication initiator protein DnaA.